Consider the following 409-residue polypeptide: Peptidase T (409 aa).

His-78 lines the Zn(2+) pocket. Asp-80 is an active-site residue. Asp-140 serves as a coordination point for Zn(2+). Glu-173 serves as the catalytic Proton acceptor. Residues Glu-174, Asp-196, and His-379 each coordinate Zn(2+).

The protein belongs to the peptidase M20B family. Zn(2+) is required as a cofactor.

The protein localises to the cytoplasm. It carries out the reaction Release of the N-terminal residue from a tripeptide.. Its function is as follows. Cleaves the N-terminal amino acid of tripeptides. The sequence is that of Peptidase T from Salmonella enteritidis PT4 (strain P125109).